Consider the following 259-residue polypeptide: Small ribosomal subunit protein mS23 (259 aa).

A compositionally biased stretch (polar residues) spans 230-244; sequence RAASFTGSALPSSEE. The segment at 230-259 is disordered; the sequence is RAASFTGSALPSSEESAPVDEETEKVPQQV.

The protein belongs to the mitochondrion-specific ribosomal protein mS23 family. As to quaternary structure, component of the mitochondrial small ribosomal subunit.

The protein localises to the mitochondrion. This Aspergillus terreus (strain NIH 2624 / FGSC A1156) protein is Small ribosomal subunit protein mS23 (rsm25).